We begin with the raw amino-acid sequence, 426 residues long: Serine--tRNA ligase (426 aa).

233–235 (TAE) lines the L-serine pocket. 264 to 266 (RSE) contacts ATP. E287 provides a ligand contact to L-serine. 351 to 354 (EISS) is a binding site for ATP. Position 387 (S387) interacts with L-serine.

Belongs to the class-II aminoacyl-tRNA synthetase family. Type-1 seryl-tRNA synthetase subfamily. As to quaternary structure, homodimer. The tRNA molecule binds across the dimer.

The protein localises to the cytoplasm. It carries out the reaction tRNA(Ser) + L-serine + ATP = L-seryl-tRNA(Ser) + AMP + diphosphate + H(+). The enzyme catalyses tRNA(Sec) + L-serine + ATP = L-seryl-tRNA(Sec) + AMP + diphosphate + H(+). It participates in aminoacyl-tRNA biosynthesis; selenocysteinyl-tRNA(Sec) biosynthesis; L-seryl-tRNA(Sec) from L-serine and tRNA(Sec): step 1/1. Functionally, catalyzes the attachment of serine to tRNA(Ser). Is also able to aminoacylate tRNA(Sec) with serine, to form the misacylated tRNA L-seryl-tRNA(Sec), which will be further converted into selenocysteinyl-tRNA(Sec). This chain is Serine--tRNA ligase, found in Clostridium botulinum (strain Kyoto / Type A2).